The chain runs to 155 residues: Protein SprT-like (155 aa).

Positions 6-148 constitute a SprT-like domain; it reads LQRLVERVSL…VCGQCGGKLM (143 aa). Histidine 67 contacts Zn(2+). Glutamate 68 is a catalytic residue. Histidine 71 is a Zn(2+) binding site.

This sequence belongs to the SprT family. It depends on Zn(2+) as a cofactor.

The protein resides in the cytoplasm. This is Protein SprT-like from Geobacillus sp. (strain WCH70).